The following is a 318-amino-acid chain: Glycine--tRNA ligase alpha subunit (318 aa).

The protein belongs to the class-II aminoacyl-tRNA synthetase family. As to quaternary structure, tetramer of two alpha and two beta subunits.

The protein localises to the cytoplasm. The catalysed reaction is tRNA(Gly) + glycine + ATP = glycyl-tRNA(Gly) + AMP + diphosphate. This chain is Glycine--tRNA ligase alpha subunit, found in Chelativorans sp. (strain BNC1).